A 100-amino-acid chain; its full sequence is Small ribosomal subunit protein uS14c (100 aa).

This sequence belongs to the universal ribosomal protein uS14 family. As to quaternary structure, part of the 30S ribosomal subunit.

It localises to the plastid. The protein localises to the cyanelle. Its function is as follows. Binds 16S rRNA, required for the assembly of 30S particles. This is Small ribosomal subunit protein uS14c from Cyanophora paradoxa.